The sequence spans 71 residues: Small ribosomal subunit protein bS18 (71 aa).

It belongs to the bacterial ribosomal protein bS18 family. Part of the 30S ribosomal subunit. Forms a tight heterodimer with protein bS6.

Its function is as follows. Binds as a heterodimer with protein bS6 to the central domain of the 16S rRNA, where it helps stabilize the platform of the 30S subunit. The chain is Small ribosomal subunit protein bS18 from Nostoc sp. (strain PCC 7120 / SAG 25.82 / UTEX 2576).